Here is a 305-residue protein sequence, read N- to C-terminus: Oxygen-dependent coproporphyrinogen-III oxidase (305 aa).

Ser-93 serves as a coordination point for substrate. A divalent metal cation-binding residues include His-97 and His-107. His-107 (proton donor) is an active-site residue. 109–111 (NVR) provides a ligand contact to substrate. Residues His-146 and His-176 each contribute to the a divalent metal cation site. The segment at 241-276 (YVEFNLVYDRGTLFGLQSGGRTESILMSLPPQVRWG) is important for dimerization. Residue 259 to 261 (GGR) coordinates substrate.

This sequence belongs to the aerobic coproporphyrinogen-III oxidase family. Homodimer. A divalent metal cation serves as cofactor.

The protein localises to the cytoplasm. It catalyses the reaction coproporphyrinogen III + O2 + 2 H(+) = protoporphyrinogen IX + 2 CO2 + 2 H2O. It participates in porphyrin-containing compound metabolism; protoporphyrin-IX biosynthesis; protoporphyrinogen-IX from coproporphyrinogen-III (O2 route): step 1/1. Its function is as follows. Involved in the heme biosynthesis. Catalyzes the aerobic oxidative decarboxylation of propionate groups of rings A and B of coproporphyrinogen-III to yield the vinyl groups in protoporphyrinogen-IX. The protein is Oxygen-dependent coproporphyrinogen-III oxidase of Pseudomonas fluorescens (strain ATCC BAA-477 / NRRL B-23932 / Pf-5).